The following is a 179-amino-acid chain: Large ribosomal subunit protein uL10 (179 aa).

Belongs to the universal ribosomal protein uL10 family. In terms of assembly, part of the ribosomal stalk of the 50S ribosomal subunit. The N-terminus interacts with L11 and the large rRNA to form the base of the stalk. The C-terminus forms an elongated spine to which L12 dimers bind in a sequential fashion forming a multimeric L10(L12)X complex.

Functionally, forms part of the ribosomal stalk, playing a central role in the interaction of the ribosome with GTP-bound translation factors. This is Large ribosomal subunit protein uL10 from Thermotoga neapolitana (strain ATCC 49049 / DSM 4359 / NBRC 107923 / NS-E).